An 89-amino-acid chain; its full sequence is Probable Fe(2+)-trafficking protein (89 aa).

It belongs to the Fe(2+)-trafficking protein family.

Its function is as follows. Could be a mediator in iron transactions between iron acquisition and iron-requiring processes, such as synthesis and/or repair of Fe-S clusters in biosynthetic enzymes. This is Probable Fe(2+)-trafficking protein from Legionella pneumophila (strain Paris).